A 65-amino-acid chain; its full sequence is Putative potassium channel toxin Ts21 (65 aa).

The signal sequence occupies residues 1 to 25 (MNKVYLVAILVLSVLLVANVSPIEG). Disulfide bonds link Cys31-Cys53, Cys38-Cys61, and Cys42-Cys63.

The protein belongs to the short scorpion toxin superfamily. Potassium channel inhibitor family. Alpha-KTx 11 subfamily. As to expression, expressed by the venom gland.

The protein resides in the secreted. Its function is as follows. This recombinant toxin inhibits the mammalian voltage-gated potassium channels Kv1.3/KCNA3 in vitro with an IC(50) of 26.40 nM. The polypeptide is Putative potassium channel toxin Ts21 (Tityus serrulatus (Brazilian scorpion)).